A 184-amino-acid polypeptide reads, in one-letter code: Peptide deformylase (184 aa).

C111 and H154 together coordinate Fe cation. E155 is an active-site residue. H158 contributes to the Fe cation binding site.

This sequence belongs to the polypeptide deformylase family. The cofactor is Fe(2+).

The enzyme catalyses N-terminal N-formyl-L-methionyl-[peptide] + H2O = N-terminal L-methionyl-[peptide] + formate. Its function is as follows. Removes the formyl group from the N-terminal Met of newly synthesized proteins. Requires at least a dipeptide for an efficient rate of reaction. N-terminal L-methionine is a prerequisite for activity but the enzyme has broad specificity at other positions. The protein is Peptide deformylase of Lactobacillus gasseri (strain ATCC 33323 / DSM 20243 / BCRC 14619 / CIP 102991 / JCM 1131 / KCTC 3163 / NCIMB 11718 / NCTC 13722 / AM63).